The chain runs to 351 residues: Cytosolic sulfotransferase 11 (351 aa).

98–103 contacts 3'-phosphoadenylyl sulfate; that stretch reads KGGTTW. Residue histidine 163 is the Proton acceptor of the active site. Residues arginine 184, serine 192, tyrosine 250, and 316 to 318 contribute to the 3'-phosphoadenylyl sulfate site; that span reads RKG.

Belongs to the sulfotransferase 1 family.

It localises to the cytoplasm. Functionally, sulfotransferase that utilizes 3'-phospho-5'-adenylyl sulfate (PAPS) as sulfonate donor. This is Cytosolic sulfotransferase 11 (SOT11) from Arabidopsis thaliana (Mouse-ear cress).